The sequence spans 129 residues: Transcriptional activator protein (129 aa).

A Nuclear localization signal motif is present at residues 13 to 28 (KAQHKIAKRRAVRRRR). Residues 33–50 (CGCSIFLHINCADNGFTH) fold into a zinc finger. Positions 73–109 (IFQDTTRRGPVVHQNQDLPHPSPVQPQPTESIGSPQS) are disordered. Position 109 is a phosphoserine; by host (Ser-109). Residues 115 to 129 (SLDDFDESFWADIFK) are transactivation.

It belongs to the geminiviridae transcriptional activator protein family. As to quaternary structure, monomer. Homodimer. Homooligomer. Self-interaction correlates with nuclear localization and efficient activation of transcription. Monomers suppress local silencing by interacting with and inactivating host adenosine kinase 2 (ADK2) in the cytoplasm. Interacts with and inhibits host SNF1 kinase. Binds to ssDNA. In terms of processing, phosphorylated at Ser-109 by A.thaliana KIN10.

The protein localises to the host nucleus. The protein resides in the host cytoplasm. In terms of biological role, strong activator of the late viral genes promoters. Enhances the expression of the capsid protein and nuclear shuttle protein. Acts as a suppressor of RNA-mediated gene silencing, also known as post-transcriptional gene silencing (PTGS), a mechanism of plant viral defense that limits the accumulation of viral RNAs. Suppresses the host RNA silencing by inhibiting adenosine kinase 2 (ADK2), a kinase involved in a general methylation pathway. Also suppresses the host basal defense by interacting with and inhibiting SNF1 kinase, a key regulator of cell metabolism implicated in innate antiviral defense. Determines pathogenicity. This is Transcriptional activator protein from Cabbage leaf curl virus (isolate Jamaica) (CaLCuV).